Consider the following 173-residue polypeptide: Transcriptional regulator ERG homolog (173 aa).

Positions 1-84 (SGQIQLWQFL…HGKRYAYKFD (84 aa)) form a DNA-binding region, ETS.

This sequence belongs to the ETS family.

It localises to the nucleus. Acts as a transcriptional activator. This is Transcriptional regulator ERG homolog (ERG) from Lytechinus variegatus (Green sea urchin).